The primary structure comprises 286 residues: MQTINRLDDLRQAVDSLKNGGKTLAFVPTMGALHEGHLTLVREAARRADHVVASIFVNPRQFGPNEDLDAYPRRMATDAALLEAEGVALLWAPTVDQMYPDGYATNISVSGVSEVACGAARPGHFDGVATVVCKLFNQVRPDFALFGEKDWQQLAVIRRMARDLDLTQPHVDRIIGVPTVREDSGLALSSRNQYLSDTERAQATGLSAAMRRAIAAIEGGAEVASSLAELTREILAAGFVSVDYADLRDAATLEEVVRFEGRPARLLVAARIGGARLIDNMGVGPQ.

30–37 contacts ATP; that stretch reads MGALHEGH. Histidine 37 serves as the catalytic Proton donor. Glutamine 61 serves as a coordination point for (R)-pantoate. Glutamine 61 lines the beta-alanine pocket. 147–150 contacts ATP; that stretch reads GEKD. Residue glutamine 153 participates in (R)-pantoate binding. ATP contacts are provided by residues valine 180 and 188–191; that span reads LSSR.

The protein belongs to the pantothenate synthetase family. As to quaternary structure, homodimer.

The protein localises to the cytoplasm. It carries out the reaction (R)-pantoate + beta-alanine + ATP = (R)-pantothenate + AMP + diphosphate + H(+). It functions in the pathway cofactor biosynthesis; (R)-pantothenate biosynthesis; (R)-pantothenate from (R)-pantoate and beta-alanine: step 1/1. Functionally, catalyzes the condensation of pantoate with beta-alanine in an ATP-dependent reaction via a pantoyl-adenylate intermediate. This chain is Pantothenate synthetase, found in Novosphingobium aromaticivorans (strain ATCC 700278 / DSM 12444 / CCUG 56034 / CIP 105152 / NBRC 16084 / F199).